Reading from the N-terminus, the 140-residue chain is Large ribosomal subunit protein uL16 (140 aa).

Residues 1–14 are compositionally biased toward basic residues; that stretch reads MLSPRRTKFRKQQR. A disordered region spans residues 1-22; that stretch reads MLSPRRTKFRKQQRGRMEGAAT.

It belongs to the universal ribosomal protein uL16 family. In terms of assembly, part of the 50S ribosomal subunit.

Its function is as follows. Binds 23S rRNA and is also seen to make contacts with the A and possibly P site tRNAs. The sequence is that of Large ribosomal subunit protein uL16 from Cyanothece sp. (strain PCC 7425 / ATCC 29141).